The primary structure comprises 144 residues: Large ribosomal subunit protein uL16 (144 aa).

This sequence belongs to the universal ribosomal protein uL16 family. Part of the 50S ribosomal subunit.

Binds 23S rRNA and is also seen to make contacts with the A and possibly P site tRNAs. This is Large ribosomal subunit protein uL16 from Bacillus anthracis (strain A0248).